Reading from the N-terminus, the 443-residue chain is tRNA-2-methylthio-N(6)-dimethylallyladenosine synthase (443 aa).

The MTTase N-terminal domain occupies 1–114 (MRFYIKTFGC…VTEAVKRALQ (114 aa)). 6 residues coordinate [4Fe-4S] cluster: Cys10, Cys46, Cys79, Cys150, Cys154, and Cys157. Residues 136-367 (RSSKHHAWVT…MNLQKRINRK (232 aa)) form the Radical SAM core domain. One can recognise a TRAM domain in the interval 370–431 (ERYKGKTVRV…AGPLYGKVVW (62 aa)).

Belongs to the methylthiotransferase family. MiaB subfamily. Monomer. Requires [4Fe-4S] cluster as cofactor.

The protein resides in the cytoplasm. It carries out the reaction N(6)-dimethylallyladenosine(37) in tRNA + (sulfur carrier)-SH + AH2 + 2 S-adenosyl-L-methionine = 2-methylsulfanyl-N(6)-dimethylallyladenosine(37) in tRNA + (sulfur carrier)-H + 5'-deoxyadenosine + L-methionine + A + S-adenosyl-L-homocysteine + 2 H(+). Functionally, catalyzes the methylthiolation of N6-(dimethylallyl)adenosine (i(6)A), leading to the formation of 2-methylthio-N6-(dimethylallyl)adenosine (ms(2)i(6)A) at position 37 in tRNAs that read codons beginning with uridine. This is tRNA-2-methylthio-N(6)-dimethylallyladenosine synthase from Thermotoga sp. (strain RQ2).